A 293-amino-acid polypeptide reads, in one-letter code: Fructose-bisphosphate aldolase (293 aa).

Ser50 serves as a coordination point for D-glyceraldehyde 3-phosphate. Asp85 acts as the Proton donor in catalysis. Zn(2+)-binding residues include His86, Asp106, Glu136, and His178. Gly179 provides a ligand contact to dihydroxyacetone phosphate. Position 208 (His208) interacts with Zn(2+). Dihydroxyacetone phosphate is bound by residues 209 to 211 (GGS) and 230 to 233 (NVNT).

This sequence belongs to the class II fructose-bisphosphate aldolase family. It depends on Zn(2+) as a cofactor.

The catalysed reaction is beta-D-fructose 1,6-bisphosphate = D-glyceraldehyde 3-phosphate + dihydroxyacetone phosphate. Its pathway is carbohydrate degradation; glycolysis; D-glyceraldehyde 3-phosphate and glycerone phosphate from D-glucose: step 4/4. Its function is as follows. Catalyzes the aldol condensation of dihydroxyacetone phosphate (DHAP or glycerone-phosphate) with glyceraldehyde 3-phosphate (G3P) to form fructose 1,6-bisphosphate (FBP) in gluconeogenesis and the reverse reaction in glycolysis. The chain is Fructose-bisphosphate aldolase (fba) from Streptococcus pyogenes serotype M3 (strain ATCC BAA-595 / MGAS315).